Reading from the N-terminus, the 144-residue chain is uncharacterized protein (144 aa).

The tract at residues 90–144 (KKEYSALKKSGKIHKVGGSKSSGHRKTKKPKKSMKGGSKTKKLSEKQLMKELLAM) is disordered. Residues 98 to 130 (KSGKIHKVGGSKSSGHRKTKKPKKSMKGGSKTK) are compositionally biased toward basic residues.

This is an uncharacterized protein from Sputnik virophage.